We begin with the raw amino-acid sequence, 174 residues long: Co-chaperone protein HscB homolog (174 aa).

Residues 2–74 (NYFELFKFSP…IRRAEHMLSL (73 aa)) enclose the J domain.

The protein belongs to the HscB family. As to quaternary structure, interacts with HscA and stimulates its ATPase activity.

In terms of biological role, co-chaperone involved in the maturation of iron-sulfur cluster-containing proteins. Seems to help targeting proteins to be folded toward HscA. This is Co-chaperone protein HscB homolog from Shewanella baltica (strain OS185).